The sequence spans 177 residues: Ribonuclease H (177 aa).

The 142-residue stretch at 1–142 (MSKQVEIFTD…ADELAREGMA (142 aa)) folds into the RNase H type-1 domain. Mg(2+) is bound by residues aspartate 10, glutamate 48, aspartate 70, and aspartate 134. Residues 126–138 (GHTENERADELAR) show a composition bias toward basic and acidic residues. The interval 126–177 (GHTENERADELAREGMAPFKKGSFKPAASAPKPDAQLKQPVATKARRSTQSY) is disordered.

The protein belongs to the RNase H family. In terms of assembly, monomer. It depends on Mg(2+) as a cofactor.

The protein resides in the cytoplasm. The catalysed reaction is Endonucleolytic cleavage to 5'-phosphomonoester.. Endonuclease that specifically degrades the RNA of RNA-DNA hybrids. The polypeptide is Ribonuclease H (Mesorhizobium japonicum (strain LMG 29417 / CECT 9101 / MAFF 303099) (Mesorhizobium loti (strain MAFF 303099))).